The following is an 847-amino-acid chain: Beta-galactosidase 1 (847 aa).

An N-terminal signal peptide occupies residues 1–32 (MGSKPNAMKNVVAMAAVSALFLLGFLVCSVSG). The active-site Proton donor is glutamate 190. The Nucleophile role is filled by glutamate 259. N-linked (GlcNAc...) asparagine glycosylation is present at asparagine 469. Residues 761-847 (KPLHPKAHLQ…KKLAVEAVCA (87 aa)) form the SUEL-type lectin domain.

It belongs to the glycosyl hydrolase 35 family. As to expression, ubiquitous, at low levels.

It localises to the secreted. It is found in the extracellular space. The protein localises to the apoplast. It carries out the reaction Hydrolysis of terminal non-reducing beta-D-galactose residues in beta-D-galactosides.. This Arabidopsis thaliana (Mouse-ear cress) protein is Beta-galactosidase 1 (BGAL1).